We begin with the raw amino-acid sequence, 126 residues long: Desulfoferrodoxin (126 aa).

Positions 10, 13, 29, 30, 49, 69, 75, 116, and 119 each coordinate Fe cation.

The protein belongs to the desulfoferrodoxin family. Homodimer. The cofactor is Fe(3+). Requires Cu(2+) as cofactor.

It carries out the reaction reduced [rubredoxin] + superoxide + 2 H(+) = oxidized [rubredoxin] + H2O2. Catalyzes the one-electron reduction of superoxide anion radical to hydrogen peroxide at a nonheme ferrous iron center. Plays a fundamental role in case of oxidative stress via its superoxide detoxification activity. The protein is Desulfoferrodoxin (dfx) of Nitratidesulfovibrio vulgaris (strain ATCC 29579 / DSM 644 / CCUG 34227 / NCIMB 8303 / VKM B-1760 / Hildenborough) (Desulfovibrio vulgaris).